The following is a 203-amino-acid chain: Suppressor of RNA silencing p3 (203 aa).

This sequence belongs to the tenuiviruses p3 protein family. Homodimer.

It is found in the host cytoplasm. Acts as a suppressor of RNA-mediated gene silencing, also known as post-transcriptional gene silencing (PTGS), presumably through the binding of dsRNA. In Oryza sativa (Rice), this protein is Suppressor of RNA silencing p3.